The following is a 371-amino-acid chain: S-adenosylmethionine:tRNA ribosyltransferase-isomerase (371 aa).

The protein belongs to the QueA family. Monomer.

The protein localises to the cytoplasm. It carries out the reaction 7-aminomethyl-7-carbaguanosine(34) in tRNA + S-adenosyl-L-methionine = epoxyqueuosine(34) in tRNA + adenine + L-methionine + 2 H(+). It participates in tRNA modification; tRNA-queuosine biosynthesis. Transfers and isomerizes the ribose moiety from AdoMet to the 7-aminomethyl group of 7-deazaguanine (preQ1-tRNA) to give epoxyqueuosine (oQ-tRNA). The polypeptide is S-adenosylmethionine:tRNA ribosyltransferase-isomerase (Prochlorococcus marinus (strain MIT 9313)).